The chain runs to 683 residues: DNA-directed RNA polymerase subunit beta' (683 aa).

Residues C69, C71, C87, and C90 each contribute to the Zn(2+) site. The Mg(2+) site is built by D489, D491, and D493.

The protein belongs to the RNA polymerase beta' chain family. RpoC1 subfamily. In plastids the minimal PEP RNA polymerase catalytic core is composed of four subunits: alpha, beta, beta', and beta''. When a (nuclear-encoded) sigma factor is associated with the core the holoenzyme is formed, which can initiate transcription. Requires Mg(2+) as cofactor. Zn(2+) is required as a cofactor.

It is found in the plastid. It localises to the chloroplast. The catalysed reaction is RNA(n) + a ribonucleoside 5'-triphosphate = RNA(n+1) + diphosphate. In terms of biological role, DNA-dependent RNA polymerase catalyzes the transcription of DNA into RNA using the four ribonucleoside triphosphates as substrates. This is DNA-directed RNA polymerase subunit beta' from Zea mays (Maize).